Reading from the N-terminus, the 57-residue chain is Large ribosomal subunit protein bL33 (57 aa).

It belongs to the bacterial ribosomal protein bL33 family.

This chain is Large ribosomal subunit protein bL33, found in Shewanella amazonensis (strain ATCC BAA-1098 / SB2B).